A 274-amino-acid chain; its full sequence is Ribosomal RNA small subunit methyltransferase A (274 aa).

6 residues coordinate S-adenosyl-L-methionine: N20, L22, G47, E68, D90, and N110.

It belongs to the class I-like SAM-binding methyltransferase superfamily. rRNA adenine N(6)-methyltransferase family. RsmA subfamily.

Its subcellular location is the cytoplasm. It carries out the reaction adenosine(1518)/adenosine(1519) in 16S rRNA + 4 S-adenosyl-L-methionine = N(6)-dimethyladenosine(1518)/N(6)-dimethyladenosine(1519) in 16S rRNA + 4 S-adenosyl-L-homocysteine + 4 H(+). In terms of biological role, specifically dimethylates two adjacent adenosines (A1518 and A1519) in the loop of a conserved hairpin near the 3'-end of 16S rRNA in the 30S particle. May play a critical role in biogenesis of 30S subunits. This Chlorobaculum parvum (strain DSM 263 / NCIMB 8327) (Chlorobium vibrioforme subsp. thiosulfatophilum) protein is Ribosomal RNA small subunit methyltransferase A.